Reading from the N-terminus, the 200-residue chain is Ras-related protein Rab-10 (200 aa).

11 residues coordinate GTP: serine 18, glycine 19, valine 20, glycine 21, lysine 22, threonine 23, cysteine 24, asparagine 35, threonine 36, serine 40, and threonine 41. Residue threonine 23 coordinates Mg(2+). 2 short sequence motifs (switch) span residues 32 to 46 (DAFN…GIDF) and 64 to 81 (DTAG…YYRG). Threonine 41 and aspartate 64 together coordinate Mg(2+). 8 residues coordinate GTP: glycine 67, asparagine 122, lysine 123, aspartate 125, methionine 126, serine 152, alanine 153, and lysine 154. Residues 181–200 (RENVDISTTGGGTGLKKCCS) are disordered. 2 S-geranylgeranyl cysteine lipidation sites follow: cysteine 198 and cysteine 199.

This sequence belongs to the small GTPase superfamily. Rab family. It depends on Mg(2+) as a cofactor.

It localises to the cytoplasmic vesicle membrane. Its subcellular location is the golgi apparatus. The protein resides in the trans-Golgi network membrane. The protein localises to the endosome membrane. It is found in the recycling endosome membrane. It localises to the cytoplasmic vesicle. Its subcellular location is the phagosome membrane. The protein resides in the cell projection. The protein localises to the cilium. It is found in the endoplasmic reticulum membrane. It catalyses the reaction GTP + H2O = GDP + phosphate + H(+). With respect to regulation, regulated by guanine nucleotide exchange factors (GEFs) which promote the exchange of bound GDP for free GTP. Regulated by GTPase activating proteins (GAPs) which increase the GTP hydrolysis activity. Inhibited by GDP dissociation inhibitors (GDIs) which prevent Rab-GDP dissociation. In terms of biological role, the small GTPases Rab are key regulators of intracellular membrane trafficking, from the formation of transport vesicles to their fusion with membranes. Rabs cycle between an inactive GDP-bound form and an active GTP-bound form that is able to recruit to membranes different set of downstream effectors directly responsible for vesicle formation, movement, tethering and fusion. That Rab is mainly involved in the biosynthetic transport of proteins from the Golgi to the plasma membrane. Also plays a specific role in asymmetric protein transport to the plasma membrane within the polarized neuron and epithelial cells. In neurons, it is involved in axonogenesis through regulation of vesicular membrane trafficking toward the axonal plasma membrane while in epithelial cells, it regulates transport from the Golgi to the basolateral membrane. Moreover, may play a role in the basolateral recycling pathway and in phagosome maturation. Finally, may play a role in endoplasmic reticulum dynamics and morphology controlling tubulation along microtubules and tubules fusion. May participate in the export of neosynthesized proteins through a Rab-dependent endosomal export route. The chain is Ras-related protein Rab-10 from Diplobatis ommata (Ocellated electric ray).